Reading from the N-terminus, the 320-residue chain is Cytochrome f (320 aa).

The first 35 residues, 1 to 35 (MQNRNTFSWVKEQMTRSIFVSMMIYIITRASISNA), serve as a signal peptide directing secretion. Heme contacts are provided by Tyr-36, Cys-56, Cys-59, and His-60. A helical transmembrane segment spans residues 286 to 306 (IQGLFLFLASVILAQIFLVLK).

It belongs to the cytochrome f family. The 4 large subunits of the cytochrome b6-f complex are cytochrome b6, subunit IV (17 kDa polypeptide, petD), cytochrome f and the Rieske protein, while the 4 small subunits are PetG, PetL, PetM and PetN. The complex functions as a dimer. Requires heme as cofactor.

The protein resides in the plastid. Its subcellular location is the chloroplast thylakoid membrane. Its function is as follows. Component of the cytochrome b6-f complex, which mediates electron transfer between photosystem II (PSII) and photosystem I (PSI), cyclic electron flow around PSI, and state transitions. This Amborella trichopoda protein is Cytochrome f.